Consider the following 749-residue polypeptide: Chitin synthase G (749 aa).

Helical transmembrane passes span cysteine 40–proline 60, valine 73–cysteine 93, phenylalanine 421–isoleucine 441, proline 451–isoleucine 471, and leucine 483–alanine 503. The disordered stretch occupies residues isoleucine 683–valine 749. Residues leucine 697 to glutamine 718 show a composition bias toward polar residues. Asparagine 715 carries an N-linked (GlcNAc...) asparagine glycan. A compositionally biased stretch (basic residues) spans tyrosine 728–tyrosine 742.

The protein belongs to the chitin synthase family. Class VI subfamily.

The protein resides in the cell membrane. The catalysed reaction is [(1-&gt;4)-N-acetyl-beta-D-glucosaminyl](n) + UDP-N-acetyl-alpha-D-glucosamine = [(1-&gt;4)-N-acetyl-beta-D-glucosaminyl](n+1) + UDP + H(+). In terms of biological role, polymerizes chitin, a structural polymer of the cell wall and septum, by transferring the sugar moiety of UDP-GlcNAc to the non-reducing end of the growing chitin polymer. Plays an important role in septal growth or maintenance. Mediates colony spore formation. This Aspergillus niger (strain ATCC MYA-4892 / CBS 513.88 / FGSC A1513) protein is Chitin synthase G.